A 178-amino-acid chain; its full sequence is 2-C-methyl-D-erythritol 2,4-cyclodiphosphate synthase (178 aa).

A divalent metal cation-binding residues include D24, H26, and H61. 24–26 (DSH) contacts 4-CDP-2-C-methyl-D-erythritol 2-phosphate. 150–153 (TSGE) provides a ligand contact to 4-CDP-2-C-methyl-D-erythritol 2-phosphate.

The protein belongs to the IspF family. Homotrimer. A divalent metal cation serves as cofactor.

It carries out the reaction 4-CDP-2-C-methyl-D-erythritol 2-phosphate = 2-C-methyl-D-erythritol 2,4-cyclic diphosphate + CMP. The protein operates within isoprenoid biosynthesis; isopentenyl diphosphate biosynthesis via DXP pathway; isopentenyl diphosphate from 1-deoxy-D-xylulose 5-phosphate: step 4/6. Its function is as follows. Involved in the biosynthesis of isopentenyl diphosphate (IPP) and dimethylallyl diphosphate (DMAPP), two major building blocks of isoprenoid compounds. Catalyzes the conversion of 4-diphosphocytidyl-2-C-methyl-D-erythritol 2-phosphate (CDP-ME2P) to 2-C-methyl-D-erythritol 2,4-cyclodiphosphate (ME-CPP) with a corresponding release of cytidine 5-monophosphate (CMP). This chain is 2-C-methyl-D-erythritol 2,4-cyclodiphosphate synthase, found in Chlamydia muridarum (strain MoPn / Nigg).